A 784-amino-acid polypeptide reads, in one-letter code: MPGVIPSESNGLSRGSPSKKNRLSLKFFQKKETKRALDFTDSQEDEEKASEYRGSEIDQVVPAAQSSPVSCEKRENLLPFVGLNNLGNTCYLNSILQVLYFCPGFKAGVKHLFNIISRKKEALKDDSIQKDKGSCKEDPLASYELICSLQSLIISVEQLQASFLLNPEKYTDELATQPRRLLNTLRELNPMYEGYLQHDAQEVLQCILGNIQETCQLLKKEEIKNLTEFSSKVEEKSLQKEETGGISSTETDSTRNLDDLKEQLPKGNWKRKSDGESGNMKKKVKLSRESQPLEENQRQTRSKRKATGDTLEASPKIIPKCVSENESAKPSQKKSKVKINWLKPATKQPSILSKFCSLGKITTNQRSKGQPKVNEGDLEEDLEKDGRDNTVNGSGPASPGSSVTPVDSSEAKSINKGAEQIGFELVEKLFQGQLVLRTRCLECESLTERREDFQDISVPVQEDELSKVEESSEISPEPKTEMKTLRWAISQFASVERIVGEDKYFCENCHHYTEAERSLLFDKMPEVITIHLKCFAASGLEFDCYGGGLSKINTPLLTPLKLSLEEWSTKPTNDSYGLFAVVMHSGITISSGHYTASVKVTDLNSLELDKGNFVVDQMCEIGKPEPLNEEEARGTAENYDDEVSIRVGGNAQPSKVLNKKNVEGIGLLGGQKSKADYELCSKASNPEKVVGTPFTDSRNSETNDTNGTQESDRSKESSDQTGINVSGLENKISYVVQSLKEYEGKWLLFDDSEVKVTEEKDFLNSLSPSTSPTSTPYLLFYKKL.

Disordered stretches follow at residues 1–21 and 33–54; these read MPGV…SKKN and TKRA…EYRG. Residues 7–16 show a composition bias toward polar residues; the sequence is SESNGLSRGS. Phosphoserine is present on residues Ser16, Ser42, and Ser67. Residues 81–784 enclose the USP domain; it reads VGLNNLGNTC…TPYLLFYKKL (704 aa). Cys90 acts as the Nucleophile in catalysis. Composition is skewed to basic and acidic residues over residues 232–243 and 252–264; these read KVEEKSLQKEET and DSTR…KEQL. 2 disordered regions span residues 232–341 and 363–411; these read KVEE…KINW and TNQR…SSEA. Residues 389 to 407 are compositionally biased toward polar residues; it reads NTVNGSGPASPGSSVTPVD. Position 475 is a phosphoserine (Ser475). His593 functions as the Proton acceptor in the catalytic mechanism. Residues 686–723 form a disordered region; the sequence is PEKVVGTPFTDSRNSETNDTNGTQESDRSKESSDQTGI. Polar residues predominate over residues 694–709; the sequence is FTDSRNSETNDTNGTQ. Position 767 is a phosphoserine (Ser767).

The protein belongs to the peptidase C19 family. Interacts with FANCD2 and PCNA. Interacts with WDR48. Interacts with ATAD5; the interaction regulates USP1-mediated PCNA deubiquitination. Autocatalytic cleavage of USP1 following UV irradiation inactivates it, leading to an increase in ubiquitinated PCNA, recruitment of POLH and translesion synthesis. Post-translationally, ubiquitinated by the CRL2(KLHDC2) complex following autocatalytic cleavage, leading to its degradation: the CRL2(KLHDC2) complex recognizes the diglycine (Gly-Gly) at the C-terminus.

The protein resides in the nucleus. It catalyses the reaction Thiol-dependent hydrolysis of ester, thioester, amide, peptide and isopeptide bonds formed by the C-terminal Gly of ubiquitin (a 76-residue protein attached to proteins as an intracellular targeting signal).. Negative regulator of DNA damage repair which specifically deubiquitinates monoubiquitinated FANCD2. Also involved in PCNA-mediated translesion synthesis (TLS) by deubiquitinating monoubiquitinated PCNA. Has almost no deubiquitinating activity by itself and requires the interaction with WDR48 to have a high activity. This is Ubiquitin carboxyl-terminal hydrolase 1 from Rattus norvegicus (Rat).